A 251-amino-acid polypeptide reads, in one-letter code: tRNA1(Val) (adenine(37)-N6)-methyltransferase (251 aa).

The protein belongs to the methyltransferase superfamily. tRNA (adenine-N(6)-)-methyltransferase family.

Its subcellular location is the cytoplasm. The enzyme catalyses adenosine(37) in tRNA1(Val) + S-adenosyl-L-methionine = N(6)-methyladenosine(37) in tRNA1(Val) + S-adenosyl-L-homocysteine + H(+). Its function is as follows. Specifically methylates the adenine in position 37 of tRNA(1)(Val) (anticodon cmo5UAC). The chain is tRNA1(Val) (adenine(37)-N6)-methyltransferase from Yersinia enterocolitica serotype O:8 / biotype 1B (strain NCTC 13174 / 8081).